The sequence spans 755 residues: Xaa-Pro dipeptidyl-peptidase (755 aa).

Active-site charge relay system residues include S348, D468, and H498.

This sequence belongs to the peptidase S15 family. In terms of assembly, homodimer.

The protein resides in the cytoplasm. It catalyses the reaction Hydrolyzes Xaa-Pro-|- bonds to release unblocked, N-terminal dipeptides from substrates including Ala-Pro-|-p-nitroanilide and (sequentially) Tyr-Pro-|-Phe-Pro-|-Gly-Pro-|-Ile.. Removes N-terminal dipeptides sequentially from polypeptides having unsubstituted N-termini provided that the penultimate residue is proline. This is Xaa-Pro dipeptidyl-peptidase from Streptococcus thermophilus (strain CNRZ 1066).